We begin with the raw amino-acid sequence, 129 residues long: UPF0325 protein YE3288 (129 aa).

The protein belongs to the UPF0325 family.

In Yersinia enterocolitica serotype O:8 / biotype 1B (strain NCTC 13174 / 8081), this protein is UPF0325 protein YE3288.